A 22-amino-acid chain; its full sequence is Dioicin-1 (22 aa).

It localises to the secreted. The protein localises to the extracellular space. It is found in the golgi apparatus. The protein resides in the vacuole. The enzyme catalyses Endohydrolysis of the N-glycosidic bond at one specific adenosine on the 28S rRNA.. Functionally, nicks pBR322 dsDNA. Has adenine polynucleotide glycosidase activity on herring sperm ssDNA. This is Dioicin-1 from Phytolacca dioica (Bella sombra tree).